The sequence spans 207 residues: GTP cyclohydrolase 1 (207 aa).

Zn(2+) contacts are provided by Cys94, His97, and Cys167.

It belongs to the GTP cyclohydrolase I family. As to quaternary structure, toroid-shaped homodecamer, composed of two pentamers of five dimers.

It catalyses the reaction GTP + H2O = 7,8-dihydroneopterin 3'-triphosphate + formate + H(+). It functions in the pathway cofactor biosynthesis; 7,8-dihydroneopterin triphosphate biosynthesis; 7,8-dihydroneopterin triphosphate from GTP: step 1/1. This Thermobifida fusca (strain YX) protein is GTP cyclohydrolase 1.